The sequence spans 137 residues: Integration host factor subunit beta (137 aa).

A compositionally biased stretch (basic and acidic residues) spans 75–92 (KRVPHFKAGKELRERVDR). Residues 75–137 (KRVPHFKAGK…EGGGLNLARS (63 aa)) form a disordered region. Residues 128–137 (EGGGLNLARS) are compositionally biased toward gly residues.

This sequence belongs to the bacterial histone-like protein family. Heterodimer of an alpha and a beta chain.

In terms of biological role, this protein is one of the two subunits of integration host factor, a specific DNA-binding protein that functions in genetic recombination as well as in transcriptional and translational control. The polypeptide is Integration host factor subunit beta (Cupriavidus pinatubonensis (strain JMP 134 / LMG 1197) (Cupriavidus necator (strain JMP 134))).